Reading from the N-terminus, the 785-residue chain is E3 UFM1-protein ligase 1 homolog (785 aa).

A disordered region spans residues 405-483 (ASFQDQDDDG…GGGGGNKKTV (79 aa)).

This sequence belongs to the UFL1 family.

E3 UFM1-protein ligase that mediates ufmylation of target proteins. The protein is E3 UFM1-protein ligase 1 homolog of Drosophila pseudoobscura pseudoobscura (Fruit fly).